Consider the following 938-residue polypeptide: MLWPRLAAAEWAALAWELLGASVLLIAVRWLVRRLGPRPGGLGRSGTPVPPPSAAAAPASGEMTMDALLARLKLLNPDDLREEIVKAGLKCGPITSTTRFIFEKKLAQALLEQGGRLSSFYHHEAGVTALSQDPQRILKPAEGNPTDQAGFSEDRDFGYSVGLNPPEEEAVTSKTCSVPPSDTDTYRAGATASKEPPLYYGVCPVYEDVPARNERIYVYENKKEALQAVKMIKGSRFKAFSTREDAEKFARGICDYFPSPSKTSLPLSPVKTAPLFSNDRLKDGLCLSESETVNKERANSYKNPRTQDLTAKLRKAVEKGEEDTFSDLIWSNPRYLIGSGDNPTIVQEGCRYNVMHVAAKENQASICQLTLDVLENPDFMRLMYPDDDEAMLQKRIRYVVDLYLNTPDKMGYDTPLHFACKFGNADVVNVLSSHHLIVKNSRNKYDKTPEDVICERSKNKSVELKERIREYLKGHYYVPLLRAEETSSPVIGELWSPDQTAEASHVSRYGGSPRDPVLTLRAFAGPLSPAKAEDFRKLWKTPPREKAGFLHHVKKSDPERGFERVGRELAHELGYPWVEYWEFLGCFVDLSSQEGLQRLEEYLTQQEIGKKAQQETGEREASCRDKATTSGSNSISVRAFLDEDDMSLEEIKNRQNAARNNSPPTVGAFGHTRCSAFPLEQEADLIEAAEPGGPHSSRNGLCHPLNHSRTLAGKRPKAPRGEEAHLPPVSDLTVEFDKLNLQNIGRSVSKTPDESTKTKDQILTSRINAVERDLLEPSPADQLGNGHRRTESEMSARIAKMSLSPSSPRHEDQLEVTREPARRLFLFGEEPSKLDQDVLAALECADVDPHQFPAVHRWKSAVLCYSPSDRQSWPSPAVKGRFKSQLPDLSGPHSYSPGRNSVAGSNPAKPGLGSPGRYSPVHGSQLRRMARLAELAAL.

Residues 1–12 lie on the Lumenal side of the membrane; that stretch reads MLWPRLAAAEWA. Residues 13-32 traverse the membrane as a helical; Signal-anchor for type III membrane protein segment; sequence ALAWELLGASVLLIAVRWLV. The Cytoplasmic portion of the chain corresponds to 33-938; it reads RRLGPRPGGL…MARLAELAAL (906 aa). Residues 69–113 form the LEM domain; it reads LARLKLLNPDDLREEIVKAGLKCGPITSTTRFIFEKKLAQALLEQ. 2 positions are modified to phosphoserine: serine 259 and serine 268. The stretch at 411–440 is one ANK repeat; the sequence is GYDTPLHFACKFGNADVVNVLSSHHLIVKN. A phosphoserine mark is found at serine 488, serine 496, serine 512, and serine 528. Residues 609–627 show a composition bias toward basic and acidic residues; the sequence is GKKAQQETGEREASCRDKA. The interval 609-636 is disordered; that stretch reads GKKAQQETGEREASCRDKATTSGSNSIS. Phosphoserine is present on residues serine 662, serine 804, serine 896, and serine 914. Positions 870 to 924 are disordered; that stretch reads RQSWPSPAVKGRFKSQLPDLSGPHSYSPGRNSVAGSNPAKPGLGSPGRYSPVHGS.

It belongs to the ANKLE2 family. As to quaternary structure, interacts with BAF/BANF1. Interacts with protein phosphatase 2A (PP2A) components PPP2C (PPP2CA or PPP2CB) and PPP2R1A. (Microbial infection) May interact with non-structural protein 4A/NS4A from Zika virus strains Mr-766 or French Polynesia 10087PF/2013; the interaction may inhibit ANKLE2 function and contribute to defects in brain development, such as microcephaly.

The protein localises to the endoplasmic reticulum membrane. Its function is as follows. Involved in mitotic nuclear envelope reassembly by promoting dephosphorylation of BAF/BANF1 during mitotic exit. Coordinates the control of BAF/BANF1 dephosphorylation by inhibiting VRK1 kinase and promoting dephosphorylation of BAF/BANF1 by protein phosphatase 2A (PP2A), thereby facilitating nuclear envelope assembly. May regulate nuclear localization of VRK1 in non-dividing cells. It is unclear whether it acts as a real PP2A regulatory subunit or whether it is involved in recruitment of the PP2A complex. Involved in brain development. The chain is Ankyrin repeat and LEM domain-containing protein 2 (ANKLE2) from Homo sapiens (Human).